Consider the following 311-residue polypeptide: Glycosyltransferase 6 domain-containing protein 1 (311 aa).

Residues 1–5 (MKAKG) are Cytoplasmic-facing. The helical; Signal-anchor for type II membrane protein transmembrane segment at 6–26 (RILLLTSCLFLLLLLLAKIHL) threads the bilayer. Topologically, residues 27–311 (RNHQEEELPL…KVAHYPTDDL (285 aa)) are lumenal. N-linked (GlcNAc...) asparagine glycosylation is present at asparagine 77. Substrate contacts are provided by residues 85–90 (FAVSSF), 176–178 (SVN), and 198–201 (HAWW). Glutamate 266 serves as the catalytic Nucleophile.

The protein belongs to the glycosyltransferase 6 family. The cofactor is Mn(2+).

It is found in the membrane. The polypeptide is Glycosyltransferase 6 domain-containing protein 1 (Glt6d1) (Rattus norvegicus (Rat)).